The primary structure comprises 499 residues: Maturase K (499 aa).

Belongs to the intron maturase 2 family. MatK subfamily.

The protein localises to the plastid. It localises to the chloroplast. Functionally, usually encoded in the trnK tRNA gene intron. Probably assists in splicing its own and other chloroplast group II introns. The chain is Maturase K from Chamaecrista fasciculata (Showy partridge pea).